We begin with the raw amino-acid sequence, 517 residues long: Succinyl-CoA:3-ketoacid coenzyme A transferase 2, mitochondrial (517 aa).

The transit peptide at 1–39 (MAALRLLASVLGRGVPAGGSGLALSQGCARCFATSPRLR) directs the protein to the mitochondrion. E341 serves as the catalytic 5-glutamyl coenzyme A thioester intermediate.

The protein belongs to the 3-oxoacid CoA-transferase family. Homodimer. As to expression, testis specific.

It localises to the mitochondrion. The catalysed reaction is a 3-oxo acid + succinyl-CoA = a 3-oxoacyl-CoA + succinate. The protein operates within ketone metabolism; succinyl-CoA degradation; acetoacetyl-CoA from succinyl-CoA: step 1/1. In terms of biological role, key enzyme for ketone body catabolism. Transfers the CoA moiety from succinate to acetoacetate. Formation of the enzyme-CoA intermediate proceeds via an unstable anhydride species formed between the carboxylate groups of the enzyme and substrate. The protein is Succinyl-CoA:3-ketoacid coenzyme A transferase 2, mitochondrial (OXCT2) of Homo sapiens (Human).